A 96-amino-acid chain; its full sequence is MARSIKKGPFADKHLTKKVEDANKGNKKSVIKTWSRRSTILPDFVGHTFAVHNGRKFVPVFVTENMVGHKLGEFAPTRTFHGHSAEKKAAAAPARK.

The segment at 1–30 is disordered; sequence MARSIKKGPFADKHLTKKVEDANKGNKKSV. Basic and acidic residues predominate over residues 9–24; the sequence is PFADKHLTKKVEDANK.

This sequence belongs to the universal ribosomal protein uS19 family.

Protein S19 forms a complex with S13 that binds strongly to the 16S ribosomal RNA. The sequence is that of Small ribosomal subunit protein uS19 from Anaeromyxobacter sp. (strain Fw109-5).